The following is a 300-amino-acid chain: Small ribosomal subunit protein uS2 (300 aa).

The interval 278 to 300 (GEAQTGNEGWGTEAAAPAATTQW) is disordered.

The protein belongs to the universal ribosomal protein uS2 family. Component of the small ribosomal subunit. Mature ribosomes consist of a small (40S) and a large (60S) subunit. The 40S subunit contains about 33 different proteins and 1 molecule of RNA (18S). The 60S subunit contains about 49 different proteins and 3 molecules of RNA (25S, 5.8S and 5S). Interacts with rps21.

The protein resides in the cytoplasm. Functionally, required for the assembly and/or stability of the 40S ribosomal subunit. Required for the processing of the 20S rRNA-precursor to mature 18S rRNA in a late step of the maturation of 40S ribosomal subunits. This chain is Small ribosomal subunit protein uS2 (rps0), found in Pyrenophora tritici-repentis (strain Pt-1C-BFP) (Wheat tan spot fungus).